The sequence spans 575 residues: GBF-interacting protein 1-like (575 aa).

2 disordered regions span residues 66–171 and 229–296; these read SKRE…SKSD and SSSN…VVHS. Polar residues-rich tracts occupy residues 90–102, 115–138, and 161–171; these read FASS…SGRN, TRGS…NETK, and ISASRCSSKSD. Residues 268-281 show a composition bias toward basic and acidic residues; the sequence is AREETSTVSEDKDY.

Belongs to the GIP1 family. As to expression, expressed in roots, leaves, stems and flowers.

It is found in the nucleus. Functionally, may act as a transcriptional coactivator of LOB domain-containing proteins. This chain is GBF-interacting protein 1-like, found in Arabidopsis thaliana (Mouse-ear cress).